Consider the following 473-residue polypeptide: High-affinity proline transporter PutP (473 aa).

12 helical membrane-spanning segments follow: residues 32–52 (LSAG…GAMF), 56–76 (LSGA…WLYV), 114–134 (IVIL…GGVL), 146–166 (GLWI…FLAV), 171–191 (FVQG…TFFH), 218–238 (VLGI…PHII), 256–276 (IGMG…LGGI), 299–319 (ILFH…AIMS), 350–370 (LVFL…VLAW), 376–396 (ILGL…PVVL), 408–428 (GALA…NAGL), and 431–451 (FLYE…FVSI).

The protein belongs to the sodium:solute symporter (SSF) (TC 2.A.21) family.

Its subcellular location is the cell membrane. The catalysed reaction is L-proline(in) + Na(+)(in) = L-proline(out) + Na(+)(out). Its function is as follows. Catalyzes the high-affinity uptake of extracellular proline. Important for the use of proline as a sole carbon and energy source or a sole nitrogen source. This is High-affinity proline transporter PutP from Bacillus subtilis (strain 168).